A 71-amino-acid chain; its full sequence is U3-scytotoxin-Sth1h (71 aa).

The signal sequence occupies residues 1 to 33 (MSQNSITSYKMGFAKHFFLFAVLLCATAMYSVA). The propeptide occupies 34–39 (EPAQER). Cystine bridges form between Cys46/Cys60, Cys53/Cys64, and Cys59/Cys69.

In terms of tissue distribution, expressed by the venom gland.

Its subcellular location is the secreted. Functionally, probable insect neurotoxin with ion channel impairing activity. Does not show activity on 45 human receptors from 9 families (5-hydroxytryptamine, adrenergic, dopamine, muscarinic, histamine, neurotransmitter, opioid, sigma, and gaba(A) receptors). In vivo, when mixed with U3-SYTX-Sth1a does not cause paralytic or lethal activity when injected into crickets. It is noteworthy that crickets are evolutionarily distant from prey species. The protein is U3-scytotoxin-Sth1h of Scytodes thoracica (Spitting spider).